The chain runs to 648 residues: 1-deoxy-D-xylulose-5-phosphate synthase (648 aa).

Residues His73 and 114–116 contribute to the thiamine diphosphate site; that span reads SHA. Residue Asp145 participates in Mg(2+) binding. Thiamine diphosphate contacts are provided by residues 146 to 147, Asn175, Tyr286, and Glu367; that span reads GA. Asn175 contacts Mg(2+).

It belongs to the transketolase family. DXPS subfamily. In terms of assembly, homodimer. It depends on Mg(2+) as a cofactor. Thiamine diphosphate is required as a cofactor.

The catalysed reaction is D-glyceraldehyde 3-phosphate + pyruvate + H(+) = 1-deoxy-D-xylulose 5-phosphate + CO2. Its pathway is metabolic intermediate biosynthesis; 1-deoxy-D-xylulose 5-phosphate biosynthesis; 1-deoxy-D-xylulose 5-phosphate from D-glyceraldehyde 3-phosphate and pyruvate: step 1/1. Its function is as follows. Catalyzes the acyloin condensation reaction between C atoms 2 and 3 of pyruvate and glyceraldehyde 3-phosphate to yield 1-deoxy-D-xylulose-5-phosphate (DXP). This is 1-deoxy-D-xylulose-5-phosphate synthase from Rhodococcus erythropolis (strain PR4 / NBRC 100887).